The chain runs to 286 residues: DNA-directed RNA polymerase subunit Rpo3 (286 aa).

This sequence belongs to the archaeal Rpo3/eukaryotic RPB3 RNA polymerase subunit family. In terms of assembly, part of the RNA polymerase complex.

The protein resides in the cytoplasm. The catalysed reaction is RNA(n) + a ribonucleoside 5'-triphosphate = RNA(n+1) + diphosphate. Functionally, DNA-dependent RNA polymerase (RNAP) catalyzes the transcription of DNA into RNA using the four ribonucleoside triphosphates as substrates. The polypeptide is DNA-directed RNA polymerase subunit Rpo3 (Aeropyrum pernix (strain ATCC 700893 / DSM 11879 / JCM 9820 / NBRC 100138 / K1)).